A 262-amino-acid chain; its full sequence is ATP synthase subunit a (262 aa).

5 consecutive transmembrane segments (helical) span residues 24–44 (AVHLDTLFFSLVAGVLFLVVF), 85–105 (IAPLALTIFCWVFIMNAIDLV), 129–149 (DISATLGMSICVFGLILFYTV), 194–214 (LFGNMYAGELIFILIAVMYMA), and 228–248 (LVWAIFHILVITLQAFIFMML).

Belongs to the ATPase A chain family. As to quaternary structure, F-type ATPases have 2 components, CF(1) - the catalytic core - and CF(0) - the membrane proton channel. CF(1) has five subunits: alpha(3), beta(3), gamma(1), delta(1), epsilon(1). CF(0) has three main subunits: a(1), b(2) and c(9-12). The alpha and beta chains form an alternating ring which encloses part of the gamma chain. CF(1) is attached to CF(0) by a central stalk formed by the gamma and epsilon chains, while a peripheral stalk is formed by the delta and b chains.

Its subcellular location is the cell inner membrane. Key component of the proton channel; it plays a direct role in the translocation of protons across the membrane. The chain is ATP synthase subunit a from Haemophilus ducreyi (strain 35000HP / ATCC 700724).